Reading from the N-terminus, the 252-residue chain is Pyridoxine 5'-phosphate synthase (252 aa).

Positions 8 and 19 each coordinate 3-amino-2-oxopropyl phosphate. His-44 functions as the Proton acceptor in the catalytic mechanism. Positions 46 and 51 each coordinate 1-deoxy-D-xylulose 5-phosphate. Glu-75 (proton acceptor) is an active-site residue. Thr-110 lines the 1-deoxy-D-xylulose 5-phosphate pocket. Catalysis depends on His-201, which acts as the Proton donor. Residues Asp-202 and Gly-224–His-225 contribute to the 3-amino-2-oxopropyl phosphate site.

Belongs to the PNP synthase family. As to quaternary structure, homooctamer; tetramer of dimers.

It is found in the cytoplasm. The catalysed reaction is 3-amino-2-oxopropyl phosphate + 1-deoxy-D-xylulose 5-phosphate = pyridoxine 5'-phosphate + phosphate + 2 H2O + H(+). It participates in cofactor biosynthesis; pyridoxine 5'-phosphate biosynthesis; pyridoxine 5'-phosphate from D-erythrose 4-phosphate: step 5/5. In terms of biological role, catalyzes the complicated ring closure reaction between the two acyclic compounds 1-deoxy-D-xylulose-5-phosphate (DXP) and 3-amino-2-oxopropyl phosphate (1-amino-acetone-3-phosphate or AAP) to form pyridoxine 5'-phosphate (PNP) and inorganic phosphate. This chain is Pyridoxine 5'-phosphate synthase, found in Albidiferax ferrireducens (strain ATCC BAA-621 / DSM 15236 / T118) (Rhodoferax ferrireducens).